Consider the following 101-residue polypeptide: Ubiquitin-related modifier 1 homolog (101 aa).

The residue at position 101 (Gly101) is a 1-thioglycine. Gly101 participates in a covalent cross-link: Glycyl lysine isopeptide (Gly-Lys) (interchain with K-? in acceptor proteins).

This sequence belongs to the URM1 family. Interacts with cer. In terms of processing, C-terminal thiocarboxylation occurs in 2 steps, it is first acyl-adenylated (-COAMP) via the hesA/moeB/thiF part of the MOCS3 homolog, then thiocarboxylated (-COSH) via the rhodanese domain of the MOCS3 homolog.

It localises to the cytoplasm. The protein operates within tRNA modification; 5-methoxycarbonylmethyl-2-thiouridine-tRNA biosynthesis. In terms of biological role, acts as a sulfur carrier required for 2-thiolation of mcm(5)S(2)U at tRNA wobble positions of cytosolic tRNA(Lys), tRNA(Glu) and tRNA(Gln). Serves as sulfur donor in tRNA 2-thiolation reaction by being thiocarboxylated (-COSH) at its C-terminus by MOCS3. The sulfur is then transferred to tRNA to form 2-thiolation of mcm(5)S(2)U. Also acts as a ubiquitin-like protein (UBL) that is covalently conjugated via an isopeptide bond to lysine residues of target proteins such as Prx2/Jafrac1, Ciao1, Eip71CD and GILT1. The thiocarboxylated form serves as substrate for conjugation and oxidative stress specifically induces the formation of UBL-protein conjugates. The protein is Ubiquitin-related modifier 1 homolog of Drosophila ananassae (Fruit fly).